The chain runs to 75 residues: MLIPYDQLEPDTLTRLIEDFVTREGTDNGDETPLQTRVLRVRHALTKGQAVIFFDLESQQCQLMLKHDVPKEFFE.

Belongs to the UPF0270 family.

The protein is UPF0270 protein PSPPH_1506 of Pseudomonas savastanoi pv. phaseolicola (strain 1448A / Race 6) (Pseudomonas syringae pv. phaseolicola (strain 1448A / Race 6)).